The sequence spans 191 residues: Peptidyl-tRNA hydrolase (191 aa).

Tyrosine 17 lines the tRNA pocket. The active-site Proton acceptor is histidine 22. TRNA is bound by residues tyrosine 68, asparagine 70, and asparagine 116.

Belongs to the PTH family. Monomer.

The protein localises to the cytoplasm. The enzyme catalyses an N-acyl-L-alpha-aminoacyl-tRNA + H2O = an N-acyl-L-amino acid + a tRNA + H(+). Its function is as follows. Hydrolyzes ribosome-free peptidyl-tRNAs (with 1 or more amino acids incorporated), which drop off the ribosome during protein synthesis, or as a result of ribosome stalling. Functionally, catalyzes the release of premature peptidyl moieties from peptidyl-tRNA molecules trapped in stalled 50S ribosomal subunits, and thus maintains levels of free tRNAs and 50S ribosomes. The sequence is that of Peptidyl-tRNA hydrolase from Mycolicibacterium smegmatis (strain ATCC 700084 / mc(2)155) (Mycobacterium smegmatis).